The sequence spans 492 residues: Catalase (492 aa).

Active-site residues include H65 and N138. Y348 contacts heme.

It belongs to the catalase family. As to quaternary structure, homotetramer. Heme serves as cofactor.

The protein localises to the cytoplasm. It localises to the cytosol. It is found in the peroxisome matrix. The enzyme catalyses 2 H2O2 = O2 + 2 H2O. Its function is as follows. Catalyzes the degradation of hydrogen peroxide (H(2)O(2)) generated by peroxisomal oxidases to water and oxygen, thereby protecting cells from the toxic effects of hydrogen peroxide. The chain is Catalase (CATA) from Triticum aestivum (Wheat).